The sequence spans 178 residues: uncharacterized protein (178 aa).

Belongs to the tail fiber family.

This is an uncharacterized protein from Escherichia coli (strain K12).